The sequence spans 386 residues: SWI/SNF-related matrix-associated actin-dependent regulator of chromatin subfamily B member 1 (386 aa).

The segment at 1 to 114 (MMMMALSKTF…DEKYKAVSIS (114 aa)) is DNA-binding.

It belongs to the SNF5 family. As to quaternary structure, component of the multiprotein chromatin-remodeling complexes SWI/SNF. Component of neural progenitors-specific chromatin remodeling complex (npBAF complex) and the neuron-specific chromatin remodeling complex (nBAF complex). Component of the BAF (SWI/SNF) chromatin remodeling complex. Component of the SWI/SNF-B (PBAF) chromatin remodeling complex. Binds to double-stranded DNA.

It is found in the nucleus. In terms of biological role, involved in chromatin-remodeling. Core component of the BAF (SWI/SNF) complex. This ATP-dependent chromatin-remodeling complex plays important roles in cell proliferation and differentiation, in cellular antiviral activities and inhibition of tumor formation. Belongs to the neural progenitors-specific chromatin remodeling complex (npBAF complex) and the neuron-specific chromatin remodeling complex (nBAF complex) and may play a role in neural development. In Gallus gallus (Chicken), this protein is SWI/SNF-related matrix-associated actin-dependent regulator of chromatin subfamily B member 1 (SMARCB1).